The following is a 680-amino-acid chain: TBC1 domain family member 23 (680 aa).

The Rab-GAP TBC domain occupies Asp-40 to Ala-221. The 113-residue stretch at Glu-330–Val-442 folds into the Rhodanese domain.

It is found in the golgi apparatus. The protein localises to the trans-Golgi network. It localises to the cytoplasmic vesicle. Functionally, putative Rab GTPase-activating protein which plays a role in vesicular trafficking. Involved in endosome-to-Golgi trafficking. Acts as a bridging protein by binding simultaneously to golgins, located at the trans-Golgi, and to the WASH complex, located on endosome-derived vesicles. Plays a role in brain development. May act as a general inhibitor of innate immunity signaling. In Danio rerio (Zebrafish), this protein is TBC1 domain family member 23 (tbc1d23).